We begin with the raw amino-acid sequence, 1059 residues long: Protein cappuccino (1059 aa).

Composition is skewed to polar residues over residues 62–80 and 90–123; these read AAVTQTPPGVTSSTPNESG and ATTSSPSLETQSTVIISFKSSQTPVQSQTNSAAS. 2 disordered regions span residues 62–146 and 448–647; these read AAVT…GTPT and QTES…TAPP. Positions 133–142 are enriched in pro residues; that stretch reads LPLPPPPPGF. Residues 468-481 are compositionally biased toward basic and acidic residues; the sequence is SDNESAKEDGEKPH. Positions 480–560 constitute an FH1 domain; it reads PHAVAPPPPP…PPPPMSASPS (81 aa). A compositionally biased stretch (pro residues) spans 483–541; that stretch reads VAPPPPPPPPPLHAFVAPPPPPPPPPPPPPPLANYGAPPPPPPPPPGSGSAPPPPPPAP. Residues 585–1032 form the FH2 domain; sequence RKSAVNPPKP…KKSKQAQIES (448 aa). Residues 620-629 show a composition bias toward polar residues; it reads TDSTENSGSS. Positions 1049 to 1059 are important for interaction with spir; sequence KERMLMRRSKN.

This sequence belongs to the formin homology family. Cappuccino subfamily. Interacts with wash. Interacts with spir.

Its subcellular location is the cytoplasm. It localises to the cytoskeleton. The protein resides in the cytosol. It is found in the membrane. The protein localises to the cytoplasmic vesicle membrane. In terms of biological role, acts as an actin nucleation factor and promotes assembly of actin filaments together with spir. May play a role in intracellular vesicle transport along actin fibers, providing a novel link between actin cytoskeleton dynamics and intracellular transport. The sequence is that of Protein cappuccino (capu) from Drosophila melanogaster (Fruit fly).